A 162-amino-acid chain; its full sequence is Early E1A 18 kDa protein (162 aa).

The interval 134-162 (EEPTEGVAENSLKRQADSSLCSSSPKRFC) is disordered. Polar residues predominate over residues 150–162 (DSSLCSSSPKRFC).

This Tree shrew adenovirus serotype 1 (TSAdV-1) protein is Early E1A 18 kDa protein.